The primary structure comprises 292 residues: Small ribosomal subunit biogenesis GTPase RsgA (292 aa).

One can recognise a CP-type G domain in the interval 64–221; that stretch reads RSELFRPAVA…LVDTPGFSSL (158 aa). Residues 113-116 and 164-172 each bind GTP; these read NKMD and GPSGVGKST. The Zn(2+) site is built by C245, C250, H252, and C258.

This sequence belongs to the TRAFAC class YlqF/YawG GTPase family. RsgA subfamily. As to quaternary structure, monomer. Associates with 30S ribosomal subunit, binds 16S rRNA. Zn(2+) serves as cofactor.

It is found in the cytoplasm. In terms of biological role, one of several proteins that assist in the late maturation steps of the functional core of the 30S ribosomal subunit. Helps release RbfA from mature subunits. May play a role in the assembly of ribosomal proteins into the subunit. Circularly permuted GTPase that catalyzes slow GTP hydrolysis, GTPase activity is stimulated by the 30S ribosomal subunit. The sequence is that of Small ribosomal subunit biogenesis GTPase RsgA from Clostridium botulinum (strain 657 / Type Ba4).